We begin with the raw amino-acid sequence, 354 residues long: 5,10-methenyltetrahydromethanopterin hydrogenase (354 aa).

It belongs to the HMD family.

The enzyme catalyses 5,10-methenyl-5,6,7,8-tetrahydromethanopterin + H2 = 5,10-methylenetetrahydromethanopterin + H(+). Its pathway is one-carbon metabolism; methanogenesis from CO(2); 5,10-methylene-5,6,7,8-tetrahydromethanopterin from 5,10-methenyl-5,6,7,8-tetrahydromethanopterin (hydrogen route): step 1/1. Its function is as follows. Catalyzes the reversible reduction of methenyl-H(4)MPT(+) to methylene-H(4)MPT. The polypeptide is 5,10-methenyltetrahydromethanopterin hydrogenase (Methanococcus vannielii (strain ATCC 35089 / DSM 1224 / JCM 13029 / OCM 148 / SB)).